The sequence spans 639 residues: MSIKLEDLHSFNEAVLFKGEEDEAPAPVLLLDKYRVRLVPITELPLVSNYSNTSQLGLNSEEVLVIDSPIESAEKQKTSSLLNRRENKKTIKSEKEDESMDMETAEGDKENTVSETGGGPLVTSFLTLDKLEKDGVNDVEIVGLDCEIQFFDANPIPFEDGISLQRFLRLESSKNFSAAVDKLPIWISTIGHHFPSVCWLAAGRTNKNVQVSGATRILGYFNENSQKLVKQLNEACGAAQVNRYRAVYDVIRKIATPTREAPGEVIIDMRWNTKSSLVLLEQPDNAADCTIKIDLGWGDNRFFIDETIFEQLFFVLNLADVLANPEKEVVFRSESDKFDDLVQEMKQLVEACSHEDNVFASNEKSEQVTDKVWNIVRKCSDVKQATMLFKNFLQALTYGKIKSHVQEGNKSHLASLIRASKTCDFRMPILERLSTIEMMMEIGVESLRGRIINKFSDTLQFPSDELTFILKTCENDLSTLEGTLHSSVVSLLPITMAMATIHQIFGFLNVKDLVVLPDLARRVLTKYTTGMVEKAKRGETETDYVFETTLPLLRMNKEAFMHKRPRIWTCENTNTVGANVQTRAMTTLELEPSLEHVCRLVNASRPVRPIDEDNRKPTEEERNADYTVSHTIFSYLPKL.

Residues 76 to 95 (QKTSSLLNRRENKKTIKSEK) are compositionally biased toward basic and acidic residues. Residues 76-116 (QKTSSLLNRRENKKTIKSEKEDESMDMETAEGDKENTVSET) are disordered. Acidic residues predominate over residues 96–105 (EDESMDMETA).

The protein belongs to the ZWILCH family. As to quaternary structure, component of the RZZ complex composed of rod-1, czw-1 and zwl-1. Interacts with the spindly-like protein spdl-1. Interacts with NDC80 complex component ndc-80.

The protein resides in the cytoplasm. It localises to the cell cortex. The protein localises to the chromosome. It is found in the centromere. Its subcellular location is the kinetochore. The protein resides in the cytoskeleton. It localises to the spindle. Its function is as follows. Essential component of the mitotic checkpoint, which prevents cells from prematurely exiting mitosis. Required for chromosome segregation, the assembly of the dynein-dynactin and mdf-1-mdf-2 complexes onto kinetochores and spindle pole separation. Its function related to the spindle assembly machinery and kinetochore-microtubule attachments likely depends on its association in the mitotic RZZ complex. The RZZ complex recruits the spindly-like protein spdl-1 to kinetochores. To prevent irregular chromosome segregation, the complex also inhibits the attachment of the kinetochore-associated NDC80 complex to microtubules. The recruitment of spdl-1 to kinetochores relieves this inhibition. Required for embryonic development. The protein is Protein zwilch homolog (zwl-1) of Caenorhabditis briggsae.